Consider the following 661-residue polypeptide: Tegument protein UL46 homolog (661 aa).

The segment at 1 to 31 (MFSRFARSFSSDDRTRKSYDGSYQSFNAGER) is disordered. Residues 10–19 (SSDDRTRKSY) show a composition bias toward basic and acidic residues. A run of 2 helical transmembrane segments spans residues 299–319 (AGTG…TALL) and 339–359 (AAIV…QYLI).

This sequence belongs to the herpesviridae HHV-1 VP11/12 protein family. Post-translationally, phosphorylated by host LCK. The phosphorylation seems to be lymphocyte-specific.

It localises to the virion tegument. The protein resides in the host cytoplasm. The protein localises to the host membrane. Its function is as follows. Plays a role in the activation of the host PI3K/AKT pathway to promote cell survival. Interacts with and activates PI3KR1 in order to phosphorylate host AKT on its activating residues. Activates the host AP-1 pathway by triggering phosphorylation of host ERK1/2. Participates in host BIM and BAD phosphorylation, leading to apoptosis inhibition. The sequence is that of Tegument protein UL46 homolog from Varicella-zoster virus (strain Oka vaccine) (HHV-3).